Here is a 1223-residue protein sequence, read N- to C-terminus: A disintegrin and metalloproteinase with thrombospondin motifs 14 (1223 aa).

The N-terminal stretch at 1-22 is a signal peptide; it reads MAPLRALLSYLLPLHCALCAAA. Positions 23–252 are excised as a propeptide; the sequence is GSRTPELHLS…QLGDTERKRR (230 aa). A glycan (N-linked (GlcNAc...) asparagine) is linked at Asn109. One can recognise a Peptidase M12B domain in the interval 259–460; sequence YSIEVLLVVD…PSYDCLLDDP (202 aa). Disulfide bonds link Cys336–Cys382, Cys376–Cys455, and Cys415–Cys441. A Zn(2+)-binding site is contributed by His398. Glu399 is an active-site residue. Zn(2+)-binding residues include His402 and His408. A Disintegrin domain is found at 461–551; it reads FDPAWPQPPE…WKSPEQTYGQ (91 aa). N-linked (GlcNAc...) asparagine glycosylation is present at Asn475. Cystine bridges form between Cys482–Cys507, Cys493–Cys516, Cys502–Cys535, Cys529–Cys540, Cys564–Cys601, Cys568–Cys606, and Cys579–Cys591. The region spanning 552-607 is the TSP type-1 1 domain; sequence DGGWSSWTKFGSCSRSCGGGVRSRSRSCNNPSPAYGGRLCLGPMFEYQVCNSEECP. A spacer region spans residues 730-846; sequence LKLVQIPAGA…GSNNVLLEEM (117 aa). 3 TSP type-1 domains span residues 847 to 907, 908 to 967, and 968 to 1022; these read DTYE…HPCS, QPVW…LRVP, and CPAQ…PACG. The N-linked (GlcNAc...) asparagine glycan is linked to Asn941. Cystine bridges form between Cys980/Cys1016, Cys984/Cys1021, and Cys995/Cys1005. The N-linked (GlcNAc...) asparagine glycan is linked to Asn1027. A PLAC domain is found at 1059-1097; that stretch reads STEPCTGDRSVFCQMEVLDRYCSIPGYHRLCCVSCIKKA. The segment at 1100 to 1223 is disordered; that stretch reads PNPGPDPGPT…TSLPAASPVT (124 aa). Residues 1101–1125 are compositionally biased toward pro residues; it reads NPGPDPGPTSLPPFSTPGSPLPGPQ. The segment covering 1199–1211 has biased composition (basic and acidic residues); that stretch reads PEDKGQPGEDLRH.

The precursor is cleaved by a furin endopeptidase. In terms of processing, glycosylated. Can be O-fucosylated by POFUT2 on a serine or a threonine residue found within the consensus sequence C1-X(2)-(S/T)-C2-G of the TSP type-1 repeat domains where C1 and C2 are the first and second cysteine residue of the repeat, respectively. Fucosylated repeats can then be further glycosylated by the addition of a beta-1,3-glucose residue by the glucosyltransferase, B3GALTL. Fucosylation mediates the efficient secretion of ADAMTS family members. Can also be C-glycosylated with one or two mannose molecules on tryptophan residues within the consensus sequence W-X-X-W of the TPRs, and N-glycosylated. These other glycosylations can also facilitate secretion. As to expression, expressed in retina and at low levels in brain, lung and placenta. High expression in fetal tissues.

The protein resides in the secreted. The protein localises to the extracellular space. Its subcellular location is the extracellular matrix. In terms of biological role, has aminoprocollagen type I processing activity in the absence of ADAMTS2. Seems to be synthesized as a latent enzyme that requires activation to display aminoprocollagen peptidase activity. Cleaves lysyl oxidase LOX at a site downstream of its propeptide cleavage site to produce a short LOX form. This Homo sapiens (Human) protein is A disintegrin and metalloproteinase with thrombospondin motifs 14 (ADAMTS14).